The primary structure comprises 60 residues: Large ribosomal subunit protein uL30 (60 aa).

This sequence belongs to the universal ribosomal protein uL30 family. Part of the 50S ribosomal subunit.

The sequence is that of Large ribosomal subunit protein uL30 from Limosilactobacillus reuteri (strain DSM 20016) (Lactobacillus reuteri).